A 429-amino-acid polypeptide reads, in one-letter code: Probable M18 family aminopeptidase 2 (429 aa).

Positions 82, 156, and 401 each coordinate Zn(2+).

It belongs to the peptidase M18 family. The cofactor is Zn(2+).

This Ectopseudomonas mendocina (strain ymp) (Pseudomonas mendocina) protein is Probable M18 family aminopeptidase 2.